The following is a 291-amino-acid chain: Pca regulon regulatory protein (291 aa).

The interval 1–22 (MSDETLVNDPVNPEPARPASAA) is disordered. The HTH iclR-type domain maps to 45–105 (MTSLARGLAV…SDGRTYSLLP (61 aa)). Residues 67-86 (IAQISHRTEIPRAAVRRCLH) constitute a DNA-binding region (H-T-H motif). Residues 120 to 291 (LAISAQPYLD…SRDLCHQLFG (172 aa)) enclose the IclR-ED domain.

Functionally, positive regulator of all genes within the pca regulon, pcaBDC, pcaIJ and pcaF. Also required for the chemotactic response to aromatic compounds. The sequence is that of Pca regulon regulatory protein (pcaR) from Pseudomonas putida (Arthrobacter siderocapsulatus).